The following is a 172-amino-acid chain: Adenine phosphoribosyltransferase (172 aa).

This sequence belongs to the purine/pyrimidine phosphoribosyltransferase family. In terms of assembly, homodimer.

Its subcellular location is the cytoplasm. It carries out the reaction AMP + diphosphate = 5-phospho-alpha-D-ribose 1-diphosphate + adenine. Its pathway is purine metabolism; AMP biosynthesis via salvage pathway; AMP from adenine: step 1/1. Functionally, catalyzes a salvage reaction resulting in the formation of AMP, that is energically less costly than de novo synthesis. The chain is Adenine phosphoribosyltransferase from Anaeromyxobacter dehalogenans (strain 2CP-C).